The primary structure comprises 173 residues: CDP-archaeol synthase (173 aa).

The next 5 membrane-spanning stretches (helical) occupy residues 15-35, 59-79, 84-104, 118-138, and 142-162; these read GLWF…FGGG, GFIV…LVVG, AGDG…GSFV, VLDQ…VYGW, and GWVL…TNVI.

Belongs to the CDP-archaeol synthase family. It depends on Mg(2+) as a cofactor.

The protein localises to the cell membrane. It carries out the reaction 2,3-bis-O-(geranylgeranyl)-sn-glycerol 1-phosphate + CTP + H(+) = CDP-2,3-bis-O-(geranylgeranyl)-sn-glycerol + diphosphate. The protein operates within membrane lipid metabolism; glycerophospholipid metabolism. Functionally, catalyzes the formation of CDP-2,3-bis-(O-geranylgeranyl)-sn-glycerol (CDP-archaeol) from 2,3-bis-(O-geranylgeranyl)-sn-glycerol 1-phosphate (DGGGP) and CTP. This reaction is the third ether-bond-formation step in the biosynthesis of archaeal membrane lipids. The protein is CDP-archaeol synthase of Methanopyrus kandleri (strain AV19 / DSM 6324 / JCM 9639 / NBRC 100938).